Here is a 244-residue protein sequence, read N- to C-terminus: Glutathione S-transferase theta-2 (244 aa).

The 81-residue stretch at 2–82 (GLELYLDLLS…YLSSKYQVAD (81 aa)) folds into the GST N-terminal domain. Residues 40-41 (HM), 53-54 (KV), 66-67 (ES), and 104-107 (DNIR) contribute to the glutathione site. Residues 88–230 (DLQARAQVHE…AKKMLPVPPP (143 aa)) form the GST C-terminal domain.

Belongs to the GST superfamily. Theta family. Homodimer. In liver, highest expression found in central vein limiting plate hepatocytes. Also expressed in interlobular bile duct epithelial cells. In lung, expressed in club cells and ciliated cells of the bronchiolar epithelium and in type II alveolar cells of the lung parenchyma.

Its subcellular location is the cytoplasm. It is found in the cytosol. The protein resides in the nucleus. The enzyme catalyses RX + glutathione = an S-substituted glutathione + a halide anion + H(+). Its function is as follows. Conjugation of reduced glutathione to a wide number of exogenous and endogenous hydrophobic electrophiles. This is Glutathione S-transferase theta-2 from Mus musculus (Mouse).